A 224-amino-acid polypeptide reads, in one-letter code: Uridylate kinase (224 aa).

Lysine 6–lysine 10 contributes to the ATP binding site. Glycine 41 lines the UMP pocket. ATP is bound by residues glycine 42 and arginine 46. Residues aspartate 63 and phenylalanine 111–threonine 117 each bind UMP. 3 residues coordinate ATP: threonine 137, phenylalanine 143, and aspartate 146.

This sequence belongs to the UMP kinase family. As to quaternary structure, homohexamer.

The protein resides in the cytoplasm. It carries out the reaction UMP + ATP = UDP + ADP. It participates in pyrimidine metabolism; CTP biosynthesis via de novo pathway; UDP from UMP (UMPK route): step 1/1. Its activity is regulated as follows. Inhibited by UTP. In terms of biological role, catalyzes the reversible phosphorylation of UMP to UDP. The sequence is that of Uridylate kinase from Metallosphaera sedula (strain ATCC 51363 / DSM 5348 / JCM 9185 / NBRC 15509 / TH2).